A 319-amino-acid polypeptide reads, in one-letter code: Epoxyqueuosine reductase (319 aa).

Residue D146 is the Proton donor of the active site. One can recognise a 4Fe-4S ferredoxin-type domain in the interval 188–220 (ASLPADQPARSLCGHCQRCLPACPTAAITEPFV). C200, C203, C206, C210, C226, C250, C253, and C257 together coordinate [4Fe-4S] cluster.

This sequence belongs to the QueG family. As to quaternary structure, monomer. Requires cob(II)alamin as cofactor. [4Fe-4S] cluster is required as a cofactor.

It is found in the cytoplasm. The catalysed reaction is epoxyqueuosine(34) in tRNA + AH2 = queuosine(34) in tRNA + A + H2O. The protein operates within tRNA modification; tRNA-queuosine biosynthesis. Catalyzes the conversion of epoxyqueuosine (oQ) to queuosine (Q), which is a hypermodified base found in the wobble positions of tRNA(Asp), tRNA(Asn), tRNA(His) and tRNA(Tyr). In Synechococcus sp. (strain RCC307), this protein is Epoxyqueuosine reductase.